The sequence spans 181 residues: tRNA-splicing endonuclease (181 aa).

Residues Tyr-118, His-126, and Lys-157 contribute to the active site.

The protein belongs to the tRNA-intron endonuclease family. Archaeal short subfamily. Homotetramer; although the tetramer contains four active sites, only two participate in the cleavage. Therefore, it should be considered as a dimer of dimers.

The enzyme catalyses pretRNA = a 3'-half-tRNA molecule with a 5'-OH end + a 5'-half-tRNA molecule with a 2',3'-cyclic phosphate end + an intron with a 2',3'-cyclic phosphate and a 5'-hydroxyl terminus.. Its function is as follows. Endonuclease that removes tRNA introns. Cleaves pre-tRNA at the 5'- and 3'-splice sites to release the intron. The products are an intron and two tRNA half-molecules bearing 2',3' cyclic phosphate and 5'-OH termini. Recognizes a pseudosymmetric substrate in which 2 bulged loops of 3 bases are separated by a stem of 4 bp. The polypeptide is tRNA-splicing endonuclease (Hyperthermus butylicus (strain DSM 5456 / JCM 9403 / PLM1-5)).